We begin with the raw amino-acid sequence, 81 residues long: Trefoil factor 3 (81 aa).

An N-terminal signal peptide occupies residues 1–22 (METRALWLMLLVVLVAGSSGIA). The region spanning 31 to 74 (SQCMVPANVRVDCGYPSVTSEQCNNRGCCFDSSIPNVPWCFKPL) is the P-type domain. Intrachain disulfides connect cysteine 33-cysteine 59, cysteine 43-cysteine 58, and cysteine 53-cysteine 70.

As to quaternary structure, monomer. Homodimer; disulfide-linked. Expressed in goblet cells of the intestines and colon (at protein level). Expressed abundantly in goblet cells of intestine and colon, and at low levels in stomach. No expression in brain, lung, spleen, kidney, uterus, pancreas, liver, heart or thymus.

It is found in the secreted. The protein localises to the extracellular space. The protein resides in the extracellular matrix. Its subcellular location is the cytoplasm. Functionally, involved in the maintenance and repair of the intestinal mucosa. Promotes the mobility of epithelial cells in healing processes (motogen). The protein is Trefoil factor 3 (Tff3) of Mus musculus (Mouse).